The sequence spans 541 residues: Protein yellow (541 aa).

The first 21 residues, 1–21, serve as a signal peptide directing secretion; that stretch reads MFQDKGWILVTLITLVTPSWA. Residues Asn-144 and Asn-215 are each glycosylated (N-linked (GlcNAc...) asparagine). Positions 443 to 463 are disordered; it reads QKPQTSWASSPPPPSRTYLPA.

This sequence belongs to the major royal jelly protein family.

The protein localises to the secreted. Controls the pigmentation pattern of the adult cuticle and larval mouth parts. In Drosophila melanogaster (Fruit fly), this protein is Protein yellow (y).